A 260-amino-acid chain; its full sequence is Small ribosomal subunit protein uS2 (260 aa).

The span at 228–240 shows a compositional bias: basic and acidic residues; sequence RKETKAENAEEAM. The tract at residues 228–260 is disordered; sequence RKETKAENAEEAMKQAAEAEAEAAAPAAEESAE. Over residues 241-260 the composition is skewed to low complexity; sequence KQAAEAEAEAAAPAAEESAE.

This sequence belongs to the universal ribosomal protein uS2 family.

The sequence is that of Small ribosomal subunit protein uS2 from Oleidesulfovibrio alaskensis (strain ATCC BAA-1058 / DSM 17464 / G20) (Desulfovibrio alaskensis).